The chain runs to 325 residues: uncharacterized protein (325 aa).

Residues 296 to 325 (QRTLSSSMEEADRPRRMSVTQPHLPPVPSA) are disordered.

It belongs to the NDRG family.

This is an uncharacterized protein from Caenorhabditis elegans.